We begin with the raw amino-acid sequence, 302 residues long: Hydra actinoporin-like toxin 4 (302 aa).

An N-terminal signal peptide occupies residues 1–17 (MLLFKLIVCFFFIFAIG). The interval 22–93 (KKDETSGENE…PAPKQTTTKK (72 aa)) is disordered. The span at 60–75 (KPPAAKPPAASKITKP) shows a compositional bias: low complexity. Over residues 76–86 (QVPPQKKPPAP) the composition is skewed to pro residues. The Cell attachment site signature appears at 274–276 (KAG).

This sequence belongs to the actinoporin family. HALT subfamily. As to quaternary structure, octamer or nonamer in membranes. Monomer in the soluble state. In vitro, interacts with folate receptor alpha (of target organism).

It is found in the nematocyst. The protein localises to the secreted. It localises to the target cell membrane. In terms of biological role, pore-forming protein that forms hydrophilic pores and causes cytolysis. Compared to equinatoxin-2 (AC P61914), it reveals lower cytolysis activity (5-12-fold difference, tested on erythrocytes), a larger pore size (probably 2-3 nm) and different affinity to membrane lipids (100-fold lower affinity to sphingomyelin). Binds to sulfatides. Shows cytolytic activity on HeLa cells, with a different potency than its paralogs (from most potent to less potent: HALT-4&gt;HALT-6~HALT-1&gt;HALT-3&gt;HALT-7&gt;HALT-2). This recombinant protein has the highest cytolytic activity compared to other rHALT proteins, probably due to its longer N-terminal sequence that may penetrate the lipid bilayer more effectively. Pore formation is a multi-step process that involves specific recognition of membrane lipid by a protein aromatic residues rich region, firm binding to the membrane (mainly driven by hydrophobic interactions) accompanied by the transfer of the N-terminal region to the lipid-water interface and finally pore formation after oligomerization of monomers. In vitro, binds to the folate receptor alpha (FOLR1), a GPI-anchored membrane protein that plays a major role in the uptake of folate/folic acid into cells via endocytosis, suggesting a possible involvement of this receptor in the mechanism of HALT-1-induced cell lysis. In vivo, does not cause visible paralysis in larvae of the blowfly Sarcophaga faculata, the most common arthropod prey of Hydra. The chain is Hydra actinoporin-like toxin 4 from Hydra vulgaris (Hydra).